Here is a 66-residue protein sequence, read N- to C-terminus: Large ribosomal subunit protein uL29 (66 aa).

Belongs to the universal ribosomal protein uL29 family.

The protein is Large ribosomal subunit protein uL29 of Bartonella quintana (strain Toulouse) (Rochalimaea quintana).